We begin with the raw amino-acid sequence, 179 residues long: Acireductone dioxygenase (179 aa).

Positions 97, 99, 103, and 141 each coordinate Fe(2+). Ni(2+) contacts are provided by histidine 97, histidine 99, glutamate 103, and histidine 141.

The protein belongs to the acireductone dioxygenase (ARD) family. Monomer. Fe(2+) serves as cofactor. Requires Ni(2+) as cofactor.

It catalyses the reaction 1,2-dihydroxy-5-(methylsulfanyl)pent-1-en-3-one + O2 = 3-(methylsulfanyl)propanoate + CO + formate + 2 H(+). It carries out the reaction 1,2-dihydroxy-5-(methylsulfanyl)pent-1-en-3-one + O2 = 4-methylsulfanyl-2-oxobutanoate + formate + 2 H(+). It participates in amino-acid biosynthesis; L-methionine biosynthesis via salvage pathway; L-methionine from S-methyl-5-thio-alpha-D-ribose 1-phosphate: step 5/6. In terms of biological role, catalyzes 2 different reactions between oxygen and the acireductone 1,2-dihydroxy-3-keto-5-methylthiopentene (DHK-MTPene) depending upon the metal bound in the active site. Fe-containing acireductone dioxygenase (Fe-ARD) produces formate and 2-keto-4-methylthiobutyrate (KMTB), the alpha-ketoacid precursor of methionine in the methionine recycle pathway. Ni-containing acireductone dioxygenase (Ni-ARD) produces methylthiopropionate, carbon monoxide and formate, and does not lie on the methionine recycle pathway. The sequence is that of Acireductone dioxygenase from Granulibacter bethesdensis (strain ATCC BAA-1260 / CGDNIH1).